A 743-amino-acid chain; its full sequence is 1,4-alpha-glucan branching enzyme GlgB 2 (743 aa).

The tract at residues 1–23 (MSERQGGQEQRTEADGMTTEGIS) is disordered. Asp422 (nucleophile) is an active-site residue. Residue Glu475 is the Proton donor of the active site.

It belongs to the glycosyl hydrolase 13 family. GlgB subfamily. Monomer.

It carries out the reaction Transfers a segment of a (1-&gt;4)-alpha-D-glucan chain to a primary hydroxy group in a similar glucan chain.. The protein operates within glycan biosynthesis; glycogen biosynthesis. Its function is as follows. Catalyzes the formation of the alpha-1,6-glucosidic linkages in glycogen by scission of a 1,4-alpha-linked oligosaccharide from growing alpha-1,4-glucan chains and the subsequent attachment of the oligosaccharide to the alpha-1,6 position. The sequence is that of 1,4-alpha-glucan branching enzyme GlgB 2 from Xanthomonas euvesicatoria pv. vesicatoria (strain 85-10) (Xanthomonas campestris pv. vesicatoria).